Here is a 199-residue protein sequence, read N- to C-terminus: MFRLLKRACSFLLFFVIYQSFVIHHNVQRVLAYKPMVEKTLAENDTKANVDLVLAMIYTETKGGEADVMQSSESSSGQKNSITDSQASIEHGVNLLSHNLALAEEAGVDSWTAVQAYNFGTAYIDYIAKHGGQNTVDLATTYSKTVVAPSLGNTSGQTYFYYHPLALISGGKLYKNGGNIYYSREVHFNLYLIELMSLF.

The protein localises to the cell surface. The sequence is that of Pneumococcal vaccine antigen A homolog (pvaA) from Streptococcus pyogenes serotype M6 (strain ATCC BAA-946 / MGAS10394).